Here is a 796-residue protein sequence, read N- to C-terminus: Probable phosphoketolase (796 aa).

The protein belongs to the XFP family. Thiamine diphosphate is required as a cofactor.

The sequence is that of Probable phosphoketolase from Synechococcus elongatus (strain ATCC 33912 / PCC 7942 / FACHB-805) (Anacystis nidulans R2).